The sequence spans 376 residues: uncharacterized protein (376 aa).

The protein belongs to the choline/ethanolamine kinase family.

This is an uncharacterized protein from Caenorhabditis elegans.